The primary structure comprises 622 residues: Apical membrane antigen 1 (622 aa).

The signal sequence occupies residues 1 to 24 (MRKLYCVLLLSAFEFTYMINFGRG). At 25-546 (QNYWEHPYQN…EHKPTYDNMK (522 aa)) the chain is on the extracellular side. Intrachain disulfides connect Cys-149–Cys-302, Cys-217–Cys-247, Cys-263–Cys-275, Cys-320–Cys-418, and Cys-337–Cys-409. Asn-162 is a glycosylation site (N-linked (GlcNAc...) asparagine). Residues Asn-286, Asn-371, Asn-421, Asn-422, and Asn-499 are each glycosylated (N-linked (GlcNAc...) asparagine). Disulfide bonds link Cys-443-Cys-502, Cys-490-Cys-507, and Cys-492-Cys-509. A helical membrane pass occupies residues 547–567 (IIIASSAAVAVLATILMVYLY). Residues 568–622 (KRKGNAEKYDKMDQPQDYGKSTSRNDEMLDPEASFWGEEKRASHTTPVLMEKPYY) are Cytoplasmic-facing. Residues 577–607 (DKMDQPQDYGKSTSRNDEMLDPEASFWGEEK) are disordered.

This sequence belongs to the apicomplexan parasites AMA1 family.

Its subcellular location is the membrane. In terms of biological role, involved in parasite invasion of erythrocytes. This chain is Apical membrane antigen 1 (AMA-1), found in Plasmodium falciparum (isolate Camp / Malaysia).